The sequence spans 112 residues: C-X-C motif chemokine 6 (112 aa).

The N-terminal stretch at 1-36 is a signal peptide; that stretch reads MRLLSSRAARVSGPSGSLCALLALLLLTPPGPLASA. Cystine bridges form between C48–C74 and C50–C90.

The protein belongs to the intercrine alpha (chemokine CxC) family.

The protein resides in the secreted. Functionally, chemotactic for neutrophil granulocytes. Signals through binding and activation of its receptors (CXCR1 and CXCR2). In addition to its chemotactic and angiogenic properties, it has strong antibacterial activity against Gram-positive and Gram-negative bacteria (90-fold-higher when compared to CXCL5 and CXCL7). This is C-X-C motif chemokine 6 (CXCL6) from Bos taurus (Bovine).